The following is a 181-amino-acid chain: S-fimbrial protein subunit SfaA (181 aa).

The N-terminal stretch at 1–24 (MKLKFISMAVFSALTLGVATNASA) is a signal peptide. Cys-44 and Cys-84 form a disulfide bridge.

Belongs to the fimbrial protein family.

The protein localises to the fimbrium. Functionally, fimbriae (also called pili), polar filaments radiating from the surface of the bacterium to a length of 0.5-1.5 micrometers and numbering 100-300 per cell, enable bacteria to colonize the epithelium of specific host organs. In terms of biological role, the major fimbrial subunit. Interacts with alpha-sialic acid-(2-3)-beta-Gal containing receptors. It belongs to the group of Mrh (Mannose-resistant hemagglutination) fimbrial proteins. This chain is S-fimbrial protein subunit SfaA (sfaA), found in Escherichia coli O6:K15:H31 (strain 536 / UPEC).